The primary structure comprises 3946 residues: Hybrid PKS-NRPS synthetase lepA (3946 aa).

The region spanning V9 to G440 is the Ketosynthase family 3 (KS3) domain. Catalysis depends on for beta-ketoacyl synthase activity residues C183, H320, and H363. Residues I553–T871 form a malonyl-CoA:ACP transacylase (MAT) domain region. The N-terminal hotdog fold stretch occupies residues H945–G1073. Residues H945–A1238 form a dehydratase (DH) domain region. The region spanning H945–L1239 is the PKS/mFAS DH domain. Residue H977 is the Proton acceptor; for dehydratase activity of the active site. Residues L1088–L1239 are C-terminal hotdog fold. The Proton donor; for dehydratase activity role is filled by D1147. The segment at L1380–G1580 is methyltransferase (MT) domain. A ketoreductase (KR) domain region spans residues T2093 to V2266. Positions S2352 to S2365 are enriched in low complexity. The disordered stretch occupies residues S2352 to S2372. One can recognise a Carrier 1 domain in the interval E2378–F2455. At S2415 the chain carries O-(pantetheine 4'-phosphoryl)serine. The interval K2474 to I2531 is disordered. Residues D2508–S2530 show a composition bias toward low complexity. Residues P2547 to D2976 are condensation (C) domain. The interval F3000–D3402 is adenylation (A) (KR) domain. The segment at G3492–S3511 is disordered. The Carrier 2 domain occupies E3515 to K3594. S3554 bears the O-(pantetheine 4'-phosphoryl)serine mark. Positions L3633–P3833 are reductase (RED) domain.

The protein in the C-terminal section; belongs to the NRP synthetase family.

In terms of biological role, hybrid PKS-NRPS synthetase; part of the gene cluster 23 that mediates the biosynthesis of a family of 2-pyridones known as leporins. The hybrid PKS-NRPS synthetase lepA and the enoyl reductase lepG are responsible for fusion of phenylalanine with a hexaketide and subsequent release of the stable tetramic acid precursor, pre-leporin C. Because lepA lacks a designated enoylreductase (ER) domain, the required activity is provided the enoyl reductase lepG. It is possible that the dehydrogenase lepF also participates in production of pre-leporin C. Cytochrome P450 monooxygenase lepH is then required for the ring expansion step to yield leporin C. Leporin C is then presumably further oxidized by the N-hydroxylase lepD to form leporin B. LepI may possess a function in biosynthesis upstream of lepA. Leporin B is further oxidized in the presence of ferric ion to give the leporin B trimer-iron chelate, but whether or not this reaction is catalyzed by an enzyme in the pathway or by ferric ion is not determined yet. The polypeptide is Hybrid PKS-NRPS synthetase lepA (Aspergillus flavus (strain ATCC 200026 / FGSC A1120 / IAM 13836 / NRRL 3357 / JCM 12722 / SRRC 167)).